A 187-amino-acid chain; its full sequence is MESLQNHFLIAMPSLDDTFFERSVIYLCEHDDKGAMGIVINKPLGIEVSSLLEQMDLPAEQVFADIAQNAQVLMGGPVSQDRGFVLHTSQPYWANSTDLGSGLMLTTSRDVLTAIGGKRSPDKFLVALGYAGWGKHQLEQELAENSWLTIPATNALLFDVKHEDRWPQASRSLGFDAWQVSAQAGHA.

Belongs to the UPF0301 (AlgH) family.

The chain is UPF0301 protein Sputcn32_2681 from Shewanella putrefaciens (strain CN-32 / ATCC BAA-453).